The primary structure comprises 135 residues: Large ribosomal subunit protein uL16c (135 aa).

It belongs to the universal ribosomal protein uL16 family. Part of the 50S ribosomal subunit.

The protein resides in the plastid. It is found in the chloroplast. In Ceratophyllum demersum (Rigid hornwort), this protein is Large ribosomal subunit protein uL16c.